We begin with the raw amino-acid sequence, 257 residues long: Protein UL133 (257 aa).

The next 2 helical transmembrane spans lie at tryptophan 14–leucine 34 and proline 45–isoleucine 65. Residues proline 149–alanine 232 form a disordered region. Positions valine 164–glutamate 175 are enriched in pro residues. A compositionally biased stretch (basic residues) spans lysine 179 to asparagine 193. Over residues glycine 214–proline 228 the composition is skewed to pro residues.

It localises to the host Golgi apparatus membrane. This chain is Protein UL133 (UL133), found in Human cytomegalovirus (strain Merlin) (HHV-5).